Consider the following 578-residue polypeptide: ATP-dependent RNA helicase dbp3 (578 aa).

The segment covering 59-69 (KRSADEEASVK) has biased composition (basic and acidic residues). The disordered stretch occupies residues 59 to 117 (KRSADEEASVKRKEKKSKHEHKKHKKDKPSADKDRISKKDKKKSKKGKSKTKEESIEIN). Over residues 70–85 (RKEKKSKHEHKKHKKD) the composition is skewed to basic residues. Residues 86 to 95 (KPSADKDRIS) are compositionally biased toward basic and acidic residues. A compositionally biased stretch (basic residues) spans 96–107 (KKDKKKSKKGKS). A Q motif motif is present at residues 167–193 (LQFDELDVSAKLREGLKNYKEPTPIQA). Residues 196-373 (WPYLLAGRDV…ATFLKDPVKI (178 aa)) form the Helicase ATP-binding domain. 209–216 (AETGSGKT) contributes to the ATP binding site. A DEAD box motif is present at residues 316-319 (DEAD). The Helicase C-terminal domain maps to 402-550 (MLDNLLRKHL…DIPEGLFKFG (149 aa)).

It belongs to the DEAD box helicase family. DDX5/DBP2 subfamily.

The protein localises to the nucleus. The protein resides in the nucleolus. It catalyses the reaction ATP + H2O = ADP + phosphate + H(+). Functionally, ATP-dependent RNA helicase required for 60S ribosomal subunit synthesis. Involved in efficient pre-rRNA processing, predominantly at site A3, which is necessary for the normal formation of 25S and 5.8S rRNAs. This Schizosaccharomyces pombe (strain 972 / ATCC 24843) (Fission yeast) protein is ATP-dependent RNA helicase dbp3 (dbp3).